The following is a 1431-amino-acid chain: Gag-Pol polyprotein (1431 aa).

G2 carries N-myristoyl glycine; by host lipidation. Positions 7 to 31 are interaction with Gp41; that stretch reads ILRGGKLDAWERIKLKPGGKKHYMM. Residues 8–43 are interaction with host CALM1; the sequence is LRGGKLDAWERIKLKPGGKKHYMMKHLVWASRELER. The interval 12–19 is interaction with host AP3D1; it reads KLDAWERI. Residues 14 to 33 form an interaction with membrane phosphatidylinositol 4,5-bisphosphate and RNA region; that stretch reads DAWERIKLKPGGKKHYMMKH. The short motif at 16–22 is the Nuclear export signal element; the sequence is WERIKLK. Residues 26 to 32 carry the Nuclear localization signal motif; it reads KKHYMMK. Positions 73–77 are interaction with membrane phosphatidylinositol 4,5-bisphosphate; sequence KELIS. Residues 106–126 are disordered; sequence EEQNKSQQKTQQAEAADKGKV. Y130 is modified (phosphotyrosine; by host). The interval 187–225 is interaction with human PPIA/CYPA and NUP153; the sequence is NTVGGHQAAMQMLKDTINEEAAEWDRLHPVHAGPVAPGQ. The segment at 275-361 is dimerization/Multimerization of capsid protein p24; the sequence is YSPVSILDIK…GGPGHKARVL (87 aa). 2 CCHC-type zinc fingers span residues 387-404 and 408-425; these read IKCF…NCRA and KGCW…DCTE. Residues 437 to 461 form a disordered region; the sequence is FPQGEARKSSSEQNRANSPTRRELQ. Residues 485–489 form a dimerization of protease region; it reads PQITL. Positions 504–573 constitute a Peptidase A2 domain; the sequence is KEALLDTGAD…TPVNIIGRNM (70 aa). Catalysis depends on D509, which acts as the For protease activity; shared with dimeric partner. 2 dimerization of protease regions span residues 533–539 and 572–584; these read GIGGFIK and NMLT…LNFP. The region spanning 627-817 is the Reverse transcriptase domain; the sequence is EGKITKIGPE…PPFLWMGYEL (191 aa). D693, D768, and D769 together coordinate Mg(2+). Residues 810-818 are RT 'primer grip'; that stretch reads FLWMGYELH. The Tryptophan repeat motif motif lies at 981–997; it reads WEAWWTDYWQATWIPEW. The 124-residue stretch at 1017–1140 folds into the RNase H type-1 domain; the sequence is IAGAETFYVD…VDKLVSSGIR (124 aa). The Mg(2+) site is built by D1026, E1061, D1081, and D1132. The Integrase-type zinc-finger motif lies at 1146-1187; sequence DGINKAQEEHEKYHSNWRAMASEFNLPPIVAKEIVASCDKCQ. Residues H1155, H1159, C1183, and C1186 each contribute to the Zn(2+) site. One can recognise an Integrase catalytic domain in the interval 1197–1347; sequence VDCSPGIWQL…SAGERIIDII (151 aa). D1207, D1259, and E1295 together coordinate Mg(2+). The segment at residues 1366 to 1413 is a DNA-binding region (integrase-type); the sequence is FRVYYRDSRDPIWKGPAKLLWKGEGAVVLQDNSDIKVVPRRKVKIIKD.

As to quaternary structure, homotrimer; further assembles as hexamers of trimers. Interacts with gp41 (via C-terminus). Interacts with host CALM1; this interaction induces a conformational change in the Matrix protein, triggering exposure of the myristate group. Interacts with host AP3D1; this interaction allows the polyprotein trafficking to multivesicular bodies during virus assembly. Part of the pre-integration complex (PIC) which is composed of viral genome, matrix protein, Vpr and integrase. In terms of assembly, homodimer; the homodimer further multimerizes as homohexamers or homopentamers. Interacts with human PPIA/CYPA; This interaction stabilizes the capsid. Interacts with human NUP153. Interacts with host PDZD8; this interaction stabilizes the capsid. Interacts with monkey TRIM5; this interaction destabilizes the capsid. Homodimer, whose active site consists of two apposed aspartic acid residues. As to quaternary structure, heterodimer of p66 RT and p51 RT (RT p66/p51). Heterodimerization of RT is essential for DNA polymerase activity. The overall folding of the subdomains is similar in p66 RT and p51 RT but the spatial arrangements of the subdomains are dramatically different. In terms of assembly, homotetramer; may further associate as a homohexadecamer. Part of the pre-integration complex (PIC) which is composed of viral genome, matrix protein, Vpr and integrase. Interacts with human SMARCB1/INI1 and human PSIP1/LEDGF isoform 1. Interacts with human KPNA3; this interaction might play a role in nuclear import of the pre-integration complex. Interacts with human NUP153; this interaction might play a role in nuclear import of the pre-integration complex. Mg(2+) serves as cofactor. In terms of processing, specific enzymatic cleavages by the viral protease yield mature proteins. The protease is released by autocatalytic cleavage. The polyprotein is cleaved during and after budding, this process is termed maturation. Proteolytic cleavage of p66 RT removes the RNase H domain to yield the p51 RT subunit. Nucleocapsid protein p7 might be further cleaved after virus entry. Tyrosine phosphorylated presumably in the virion by a host kinase. Phosphorylation is apparently not a major regulator of membrane association. Post-translationally, phosphorylated possibly by host MAPK1; this phosphorylation is necessary for Pin1-mediated virion uncoating. In terms of processing, methylated by host PRMT6, impairing its function by reducing RNA annealing and the initiation of reverse transcription.

It localises to the host cell membrane. Its subcellular location is the host endosome. It is found in the host multivesicular body. The protein resides in the virion membrane. The protein localises to the host nucleus. It localises to the host cytoplasm. Its subcellular location is the virion. It carries out the reaction Specific for a P1 residue that is hydrophobic, and P1' variable, but often Pro.. The catalysed reaction is Endohydrolysis of RNA in RNA/DNA hybrids. Three different cleavage modes: 1. sequence-specific internal cleavage of RNA. Human immunodeficiency virus type 1 and Moloney murine leukemia virus enzymes prefer to cleave the RNA strand one nucleotide away from the RNA-DNA junction. 2. RNA 5'-end directed cleavage 13-19 nucleotides from the RNA end. 3. DNA 3'-end directed cleavage 15-20 nucleotides away from the primer terminus.. It catalyses the reaction 3'-end directed exonucleolytic cleavage of viral RNA-DNA hybrid.. The enzyme catalyses DNA(n) + a 2'-deoxyribonucleoside 5'-triphosphate = DNA(n+1) + diphosphate. Protease: The viral protease is inhibited by many synthetic protease inhibitors (PIs), such as amprenavir, atazanavir, indinavir, loprinavir, nelfinavir, ritonavir and saquinavir. Use of protease inhibitors in tritherapy regimens permit more ambitious therapeutic strategies. Reverse transcriptase/ribonuclease H: RT can be inhibited either by nucleoside RT inhibitors (NRTIs) or by non nucleoside RT inhibitors (NNRTIs). NRTIs act as chain terminators, whereas NNRTIs inhibit DNA polymerization by binding a small hydrophobic pocket near the RT active site and inducing an allosteric change in this region. Classical NRTIs are abacavir, adefovir (PMEA), didanosine (ddI), lamivudine (3TC), stavudine (d4T), tenofovir (PMPA), zalcitabine (ddC), and zidovudine (AZT). Classical NNRTIs are atevirdine (BHAP U-87201E), delavirdine, efavirenz (DMP-266), emivirine (I-EBU), and nevirapine (BI-RG-587). The tritherapies used as a basic effective treatment of AIDS associate two NRTIs and one NNRTI. Functionally, mediates, with Gag polyprotein, the essential events in virion assembly, including binding the plasma membrane, making the protein-protein interactions necessary to create spherical particles, recruiting the viral Env proteins, and packaging the genomic RNA via direct interactions with the RNA packaging sequence (Psi). Gag-Pol polyprotein may regulate its own translation, by the binding genomic RNA in the 5'-UTR. At low concentration, the polyprotein would promote translation, whereas at high concentration, the polyprotein would encapsidate genomic RNA and then shut off translation. Its function is as follows. Targets the polyprotein to the plasma membrane via a multipartite membrane-binding signal, that includes its myristoylated N-terminus. Matrix protein is part of the pre-integration complex. Implicated in the release from host cell mediated by Vpu. Binds to RNA. In terms of biological role, forms the conical core that encapsulates the genomic RNA-nucleocapsid complex in the virion. Most core are conical, with only 7% tubular. The core is constituted by capsid protein hexamer subunits. The core is disassembled soon after virion entry. Host restriction factors such as TRIM5-alpha or TRIMCyp bind retroviral capsids and cause premature capsid disassembly, leading to blocks in reverse transcription. Capsid restriction by TRIM5 is one of the factors which restricts HIV-1 to the human species. Host PIN1 apparently facilitates the virion uncoating. On the other hand, interactions with PDZD8 or CYPA stabilize the capsid. Encapsulates and protects viral dimeric unspliced genomic RNA (gRNA). Binds these RNAs through its zinc fingers. Acts as a nucleic acid chaperone which is involved in rearangement of nucleic acid secondary structure during gRNA retrotranscription. Also facilitates template switch leading to recombination. As part of the polyprotein, participates in gRNA dimerization, packaging, tRNA incorporation and virion assembly. Functionally, aspartyl protease that mediates proteolytic cleavages of Gag and Gag-Pol polyproteins during or shortly after the release of the virion from the plasma membrane. Cleavages take place as an ordered, step-wise cascade to yield mature proteins. This process is called maturation. Displays maximal activity during the budding process just prior to particle release from the cell. Also cleaves Nef and Vif, probably concomitantly with viral structural proteins on maturation of virus particles. Hydrolyzes host EIF4GI and PABP1 in order to shut off the capped cellular mRNA translation. The resulting inhibition of cellular protein synthesis serves to ensure maximal viral gene expression and to evade host immune response. Also mediates cleavage of host YTHDF3. Mediates cleavage of host CARD8, thereby activating the CARD8 inflammasome, leading to the clearance of latent HIV-1 in patient CD4(+) T-cells after viral reactivation; in contrast, HIV-1 can evade CARD8-sensing when its protease remains inactive in infected cells prior to viral budding. Its function is as follows. Multifunctional enzyme that converts the viral RNA genome into dsDNA in the cytoplasm, shortly after virus entry into the cell. This enzyme displays a DNA polymerase activity that can copy either DNA or RNA templates, and a ribonuclease H (RNase H) activity that cleaves the RNA strand of RNA-DNA heteroduplexes in a partially processive 3' to 5' endonucleasic mode. Conversion of viral genomic RNA into dsDNA requires many steps. A tRNA(3)-Lys binds to the primer-binding site (PBS) situated at the 5'-end of the viral RNA. RT uses the 3' end of the tRNA primer to perform a short round of RNA-dependent minus-strand DNA synthesis. The reading proceeds through the U5 region and ends after the repeated (R) region which is present at both ends of viral RNA. The portion of the RNA-DNA heteroduplex is digested by the RNase H, resulting in a ssDNA product attached to the tRNA primer. This ssDNA/tRNA hybridizes with the identical R region situated at the 3' end of viral RNA. This template exchange, known as minus-strand DNA strong stop transfer, can be either intra- or intermolecular. RT uses the 3' end of this newly synthesized short ssDNA to perform the RNA-dependent minus-strand DNA synthesis of the whole template. RNase H digests the RNA template except for two polypurine tracts (PPTs) situated at the 5'-end and near the center of the genome. It is not clear if both polymerase and RNase H activities are simultaneous. RNase H probably can proceed both in a polymerase-dependent (RNA cut into small fragments by the same RT performing DNA synthesis) and a polymerase-independent mode (cleavage of remaining RNA fragments by free RTs). Secondly, RT performs DNA-directed plus-strand DNA synthesis using the PPTs that have not been removed by RNase H as primers. PPTs and tRNA primers are then removed by RNase H. The 3' and 5' ssDNA PBS regions hybridize to form a circular dsDNA intermediate. Strand displacement synthesis by RT to the PBS and PPT ends produces a blunt ended, linear dsDNA copy of the viral genome that includes long terminal repeats (LTRs) at both ends. In terms of biological role, catalyzes viral DNA integration into the host chromosome, by performing a series of DNA cutting and joining reactions. This enzyme activity takes place after virion entry into a cell and reverse transcription of the RNA genome in dsDNA. The first step in the integration process is 3' processing. This step requires a complex comprising the viral genome, matrix protein, Vpr and integrase. This complex is called the pre-integration complex (PIC). The integrase protein removes 2 nucleotides from each 3' end of the viral DNA, leaving recessed CA OH's at the 3' ends. In the second step, the PIC enters cell nucleus. This process is mediated through integrase and Vpr proteins, and allows the virus to infect a non dividing cell. This ability to enter the nucleus is specific of lentiviruses, other retroviruses cannot and rely on cell division to access cell chromosomes. In the third step, termed strand transfer, the integrase protein joins the previously processed 3' ends to the 5' ends of strands of target cellular DNA at the site of integration. The 5'-ends are produced by integrase-catalyzed staggered cuts, 5 bp apart. A Y-shaped, gapped, recombination intermediate results, with the 5'-ends of the viral DNA strands and the 3' ends of target DNA strands remaining unjoined, flanking a gap of 5 bp. The last step is viral DNA integration into host chromosome. This involves host DNA repair synthesis in which the 5 bp gaps between the unjoined strands are filled in and then ligated. Since this process occurs at both cuts flanking the HIV genome, a 5 bp duplication of host DNA is produced at the ends of HIV-1 integration. Alternatively, Integrase may catalyze the excision of viral DNA just after strand transfer, this is termed disintegration. The chain is Gag-Pol polyprotein (gag-pol) from Homo sapiens (Human).